The primary structure comprises 962 residues: AP2-associated protein kinase 1 (962 aa).

Methionine 1 bears the N-acetylmethionine mark. A compositionally biased stretch (basic and acidic residues) spans 1 to 11 (MKKFFDSRREQ). Residues 1–27 (MKKFFDSRREQGSSGLGSGSSGGGGSS) are disordered. Position 14 is a phosphoserine (serine 14). Positions 14-27 (SGLGSGSSGGGGSS) are enriched in gly residues. The Protein kinase domain occupies 46–314 (VTVDEVLAEG…QVSYFSFKLL (269 aa)). ATP-binding positions include 52 to 60 (LAEGGFALV) and lysine 74. Aspartate 176 serves as the catalytic Proton acceptor. Tyrosine 234 bears the Phosphotyrosine mark. Serine 235 carries the post-translational modification Phosphoserine. Disordered regions lie at residues 325-515 (NSPI…QFQA) and 576-633 (PQAQ…RAGH). Phosphothreonine is present on residues threonine 353 and threonine 388. Arginine 390 is modified (omega-N-methylarginine). A compositionally biased stretch (polar residues) spans 397–418 (PLPQATGPSNQPSLLASVSQPK). A compositionally biased stretch (low complexity) spans 419-434 (AQATPSQPLQSSQPKQ). Residues 435–444 (PQAPPTPQQT) show a composition bias toward pro residues. The residue at position 440 (threonine 440) is a Phosphothreonine. 3 stretches are compositionally biased toward low complexity: residues 445–485 (PAPQ…QPQQ), 498–514 (QQQQ…QQFQ), and 576–606 (PQAQ…KVQT). Threonine 607 is modified (phosphothreonine). Residues 614-628 (GQKVGSLTPPSSPKT) are compositionally biased toward polar residues. Serine 619 carries the phosphoserine modification. At threonine 621 the chain carries Phosphothreonine. Phosphoserine is present on residues serine 624, serine 625, serine 638, and serine 651. At threonine 654 the chain carries Phosphothreonine. Residues 664–677 (ASLSKSKSATTTPS) show a composition bias toward low complexity. The segment at 664-702 (ASLSKSKSATTTPSGSPRTSQQNVSNASEGSTWNPFDDD) is disordered. The segment covering 678-697 (GSPRTSQQNVSNASEGSTWN) has biased composition (polar residues). Phosphoserine is present on residues serine 732, serine 847, serine 938, and serine 939. The tract at residues 824-961 (EKADAAVESL…SLLLVDQLID (138 aa)) is clathrin-binding domain (CBD). Disordered regions lie at residues 839-860 (PPVA…TDSL) and 925-946 (LITK…ESSL). The span at 846-860 (PSHTESVTSNRTDSL) shows a compositional bias: polar residues. Residues 932–945 (GGHSRNSSGSSESS) show a composition bias toward low complexity.

The protein belongs to the protein kinase superfamily. Ser/Thr protein kinase family. As to quaternary structure, interacts (via CBD domain) with clathrin. Interacts with AP-2 complex. Interacts with NUMB. Interacts with alpha-adaptin. Interacts with EPS15. Interacts with membrane-bound activated NOTCH1 but not with the inactive full-length form of NOTCH1. Preferentially interacts with monoubiquitinated activated NOTCH1 compared to the non-ubiquitinated form. Post-translationally, autophosphorylated.

Its subcellular location is the cell membrane. The protein resides in the membrane. It localises to the clathrin-coated pit. The protein localises to the presynapse. The enzyme catalyses L-seryl-[protein] + ATP = O-phospho-L-seryl-[protein] + ADP + H(+). The catalysed reaction is L-threonyl-[protein] + ATP = O-phospho-L-threonyl-[protein] + ADP + H(+). With respect to regulation, stimulated by clathrin. Functionally, regulates clathrin-mediated endocytosis by phosphorylating the AP2M1/mu2 subunit of the adaptor protein complex 2 (AP-2) which ensures high affinity binding of AP-2 to cargo membrane proteins during the initial stages of endocytosis. Preferentially, may phosphorylate substrates on threonine residues. Regulates phosphorylation of other AP-2 subunits as well as AP-2 localization and AP-2-mediated internalization of ligand complexes. Phosphorylates NUMB and regulates its cellular localization, promoting NUMB localization to endosomes. Binds to and stabilizes the activated form of NOTCH1, increases its localization in endosomes and regulates its transcriptional activity. In Rattus norvegicus (Rat), this protein is AP2-associated protein kinase 1 (Aak1).